A 196-amino-acid polypeptide reads, in one-letter code: UPF0134 protein MPN_501 (196 aa).

It belongs to the UPF0134 family.

The sequence is that of UPF0134 protein MPN_501 from Mycoplasma pneumoniae (strain ATCC 29342 / M129 / Subtype 1) (Mycoplasmoides pneumoniae).